The chain runs to 181 residues: Probable inosine/xanthosine triphosphatase (181 aa).

Position 65 (aspartate 65) interacts with Mg(2+).

It belongs to the YjjX NTPase family. Homodimer. Mg(2+) is required as a cofactor. Mn(2+) serves as cofactor.

It catalyses the reaction XTP + H2O = XDP + phosphate + H(+). The catalysed reaction is ITP + H2O = IDP + phosphate + H(+). Phosphatase that hydrolyzes non-canonical purine nucleotides such as XTP and ITP to their respective diphosphate derivatives. Probably excludes non-canonical purines from DNA/RNA precursor pool, thus preventing their incorporation into DNA/RNA and avoiding chromosomal lesions. In Caldivirga maquilingensis (strain ATCC 700844 / DSM 13496 / JCM 10307 / IC-167), this protein is Probable inosine/xanthosine triphosphatase.